The sequence spans 1034 residues: Presequence protease, mitochondrial (1034 aa).

The transit peptide at 1-26 (MLKTRLKQSRAISRVVRRYACSHPIS) directs the protein to the mitochondrion. A Zn(2+)-binding site is contributed by His-97. Residue Glu-100 is the Proton acceptor of the active site. Residue His-101 coordinates Zn(2+). Residue Glu-173 is part of the active site. Glu-198 serves as a coordination point for Zn(2+).

This sequence belongs to the peptidase M16 family. PreP subfamily. In terms of assembly, monomer and homodimer; homodimerization is induced by binding of the substrate. Zn(2+) is required as a cofactor.

It localises to the mitochondrion intermembrane space. It is found in the mitochondrion matrix. Degrades mitochondrial transit peptides after their cleavage in the intermembrane space or in the matrix, and presequence peptides; clearance of these peptides is required to keep the presequence processing machinery running. Preferentially cleaves the N-terminal side of paired basic amino acid residues. Also degrades other unstructured peptides. May function as an ATP-dependent peptidase as opposed to a metalloendopeptidase. In Candida albicans (strain SC5314 / ATCC MYA-2876) (Yeast), this protein is Presequence protease, mitochondrial (CYM1).